The sequence spans 1202 residues: Adenine-specific methyltransferase PglX (1202 aa).

The protein belongs to the methyltransferase superfamily. PglX adenine methyltransferase family.

The enzyme catalyses a 2'-deoxyadenosine in DNA + S-adenosyl-L-methionine = an N(6)-methyl-2'-deoxyadenosine in DNA + S-adenosyl-L-homocysteine + H(+). In terms of biological role, BREX systems (bacteriophage exclusion) provide immunity against bacteriophage. Part of a type 1 BREX system which protects against dsDNA phage. This system allows phage adsorption but prevents phage DNA replication, without degradation of the phage DNA. Methylation of bacterial DNA by this protein guides self/non-self discrimination. Probably methylates the adenine in the fifth position of the hexamer 5'-ACRCAG-3' in genomic DNA. N(6)-methylated adenine on the fifth position of 5'-ACRCAG-3' is found in the genome; there are 1906 sites in the genomic DNA. The polypeptide is Adenine-specific methyltransferase PglX (Lacticaseibacillus casei (strain Zhang) (Lactobacillus casei)).